The following is a 461-amino-acid chain: UPF0210 protein Ddes_0622 (461 aa).

Belongs to the UPF0210 family. Homodimer.

In Desulfovibrio desulfuricans (strain ATCC 27774 / DSM 6949 / MB), this protein is UPF0210 protein Ddes_0622.